Reading from the N-terminus, the 521-residue chain is 3,4-dihydroxyphenylacetaldehyde synthase (521 aa).

Lysine 306 carries the post-translational modification N6-(pyridoxal phosphate)lysine.

It belongs to the group II decarboxylase family. Requires pyridoxal 5'-phosphate as cofactor. Highly expressed in the cuticle and midgut. Low expression in the head and thorax.

The catalysed reaction is L-dopa + O2 + H2O + H(+) = 3,4-dihydroxyphenylacetaldehyde + H2O2 + NH4(+) + CO2. In terms of biological role, catalyzes the decarboxylation-oxidative deamination of L-3,4-dihydroxyphenylalanine (L-DOPA) to 3,4-dihydroxylphenylacetaldehyde (DHPAA). Involved in cuticle development. Probably responsible for the protein cross-linking during the development of flexible cuticles. The chain is 3,4-dihydroxyphenylacetaldehyde synthase from Aedes aegypti (Yellowfever mosquito).